Here is a 573-residue protein sequence, read N- to C-terminus: DNA ligase (573 aa).

Glutamate 250 lines the ATP pocket. The active-site N6-AMP-lysine intermediate is lysine 252. The ATP site is built by arginine 257, arginine 272, glutamate 301, phenylalanine 342, arginine 432, and lysine 438.

Belongs to the ATP-dependent DNA ligase family. Requires Mg(2+) as cofactor.

The catalysed reaction is ATP + (deoxyribonucleotide)n-3'-hydroxyl + 5'-phospho-(deoxyribonucleotide)m = (deoxyribonucleotide)n+m + AMP + diphosphate.. Functionally, DNA ligase that seals nicks in double-stranded DNA during DNA replication, DNA recombination and DNA repair. The polypeptide is DNA ligase (Methanococcus maripaludis (strain C6 / ATCC BAA-1332)).